A 240-amino-acid polypeptide reads, in one-letter code: Large ribosomal subunit protein uL1 (240 aa).

This sequence belongs to the universal ribosomal protein uL1 family. Part of the 50S ribosomal subunit.

Its function is as follows. Binds directly to 23S rRNA. The L1 stalk is quite mobile in the ribosome, and is involved in E site tRNA release. Protein L1 is also a translational repressor protein, it controls the translation of the L11 operon by binding to its mRNA. This chain is Large ribosomal subunit protein uL1, found in Nocardioides sp. (strain ATCC BAA-499 / JS614).